The following is an 802-amino-acid chain: MRCPSLARLPNRALSGLTRSPVRLQSQNFLYQRCASTAALRSPIAGPAYQSVFHRHNLQRRNASAATTAAVLEAAASNPDGLSQEAIIDNLDPAEAIRLSRLRNIGIAAHIDSGKTTCTERVLFYTGRIKAIHEVRGRDNVGAKMDSMDLEREKGITIQSAATFCDWIKKGDDGKEEKYHINLIDTPGHIDFTIEVERALRVLDGAVMILCAVSGVQSQTITVDRQMRRYNVPRISFVNKMDRMGANPFKAVEQINTKLKIPAAAVQVPIGAEDEFEGVVDLIRMKSIYNDGPNGETVVVKDEIPEKVKSVVEERRRMLIETLADVDDEIAELFLEETEPTEQQLKAAIRRATIGLKFTPVFMGSALANKSVQPMLDGVIDYLPNPSEVENLALDRKRDEASVKLVPYNSQPFVGLAFKLEESNFGQLTYIRVYQGTLRKGANVFNARNNKKVKVPRIVRMHSNEMEEVSEIGAGEICAVFGVDCASGDTFTDGQLGYTMTSMFVPEPVISLSIKPKNSKDSANFSKAMARFQREDPTFRVSYNAESEETLISGMGELHLDIYIERMRREYRVDCVTGPPQVAYRETIGNRVEFDHLLKKQSGGPGEYARVVGWMEPTGKLEDNKFEEQIVGGSISEKFLFACEKGFNLACEKGPLIGHKVLGTKMVINDGATHMTDSSEMSFKNATQQAFRKAFMESNPSVLEPMMKIAVTAPGEFQGDVISLLNKRNATINDTETGVDEFTVYADCSLNGMFGFSTHLRAATQGKGEFTMEFSHYEKAQPQLQKELIQKYLKAQADRHKK.

A mitochondrion-targeting transit peptide spans 1–24; the sequence is MRCPSLARLPNRALSGLTRSPVRL. In terms of domain architecture, tr-type G spans 100-387; it reads SRLRNIGIAA…GVIDYLPNPS (288 aa). GTP contacts are provided by residues 109–116, 185–189, and 239–242; these read AHIDSGKT, DTPGH, and NKMD.

This sequence belongs to the TRAFAC class translation factor GTPase superfamily. Classic translation factor GTPase family. EF-G/EF-2 subfamily.

The protein localises to the mitochondrion. It participates in protein biosynthesis; polypeptide chain elongation. Functionally, mitochondrial GTPase that catalyzes the GTP-dependent ribosomal translocation step during translation elongation. During this step, the ribosome changes from the pre-translocational (PRE) to the post-translocational (POST) state as the newly formed A-site-bound peptidyl-tRNA and P-site-bound deacylated tRNA move to the P and E sites, respectively. Catalyzes the coordinated movement of the two tRNA molecules, the mRNA and conformational changes in the ribosome. The polypeptide is Elongation factor G, mitochondrial (mef1) (Aspergillus fumigatus (strain CBS 144.89 / FGSC A1163 / CEA10) (Neosartorya fumigata)).